The chain runs to 299 residues: MTKIKIVVIVGPTAVGKTALGISLAKAFNGEIISGDSQQVYRQLDIGTAKATQEEQEAAVHHLIDIREVTESYSAYDFVQDAQKAISDIVSRGKLPIIVGGTGLYLQSLLEGYHLGGQVDQEAVKAYRNELEQLDDHDLYERLQVNNITIEQVNRRRAIRALELAQFADELENAETAYEPLIIGLNDDRQVIYDRINQRVDRMLENGLLEEAKWLYEHYPTVQASRGIGYKELFPYFVGEMTLAEASDQLKQNTRRFAKRQLTWFRNRMAVSFTAITAPDYPQVVHDRVRDFLGQKEKS.

11–18 (GPTAVGKT) contributes to the ATP binding site. A substrate-binding site is contributed by 13–18 (TAVGKT). The segment at 36–39 (DSQQ) is interaction with substrate tRNA.

This sequence belongs to the IPP transferase family. In terms of assembly, monomer. Requires Mg(2+) as cofactor.

The catalysed reaction is adenosine(37) in tRNA + dimethylallyl diphosphate = N(6)-dimethylallyladenosine(37) in tRNA + diphosphate. Catalyzes the transfer of a dimethylallyl group onto the adenine at position 37 in tRNAs that read codons beginning with uridine, leading to the formation of N6-(dimethylallyl)adenosine (i(6)A). In Streptococcus pyogenes serotype M18 (strain MGAS8232), this protein is tRNA dimethylallyltransferase.